Reading from the N-terminus, the 107-residue chain is Large ribosomal subunit protein uL24 (107 aa).

It belongs to the universal ribosomal protein uL24 family. In terms of assembly, part of the 50S ribosomal subunit.

In terms of biological role, one of two assembly initiator proteins, it binds directly to the 5'-end of the 23S rRNA, where it nucleates assembly of the 50S subunit. Its function is as follows. One of the proteins that surrounds the polypeptide exit tunnel on the outside of the subunit. This is Large ribosomal subunit protein uL24 from Fervidobacterium nodosum (strain ATCC 35602 / DSM 5306 / Rt17-B1).